A 1058-amino-acid polypeptide reads, in one-letter code: Ubiquitin-like modifier-activating enzyme 1 (1058 aa).

The disordered stretch occupies residues methionine 1–glutamate 47. N-acetylserine is present on serine 2. Serine 4, serine 13, serine 21, serine 24, and serine 46 each carry phosphoserine. The span at serine 21–threonine 38 shows a compositional bias: polar residues. Tyrosine 55 is modified (phosphotyrosine). Repeat copies occupy residues glycine 63 to phenylalanine 199 and glycine 459 to isoleucine 611. A 2 approximate repeats region spans residues glycine 63 to isoleucine 611. Residues alanine 478, aspartate 504, arginine 515, lysine 528, and aspartate 576–asparagine 577 each bind ATP. Residue lysine 528 is modified to N6-succinyllysine. The active-site Glycyl thioester intermediate is cysteine 632. At lysine 671 the chain carries N6-acetyllysine. Threonine 800 is modified (phosphothreonine). A phosphoserine mark is found at serine 810, serine 816, serine 820, and serine 835. The residue at position 980 (lysine 980) is an N6-acetyllysine.

It belongs to the ubiquitin-activating E1 family. Monomer. In terms of tissue distribution, ubiquitous.

Its subcellular location is the cytoplasm. The protein resides in the mitochondrion. It localises to the nucleus. The catalysed reaction is ATP + ubiquitin + [E1 ubiquitin-activating enzyme]-L-cysteine = AMP + diphosphate + S-ubiquitinyl-[E1 ubiquitin-activating enzyme]-L-cysteine.. It participates in protein modification; protein ubiquitination. Functionally, catalyzes the first step in ubiquitin conjugation to mark cellular proteins for degradation through the ubiquitin-proteasome system. Activates ubiquitin by first adenylating its C-terminal glycine residue with ATP, and thereafter linking this residue to the side chain of a cysteine residue in E1, yielding a ubiquitin-E1 thioester and free AMP. Essential for the formation of radiation-induced foci, timely DNA repair and for response to replication stress. Promotes the recruitment of TP53BP1 and BRCA1 at DNA damage sites. This is Ubiquitin-like modifier-activating enzyme 1 (UBA1) from Oryctolagus cuniculus (Rabbit).